The chain runs to 451 residues: MTISDSPQTPENLSLPKQGFRQLIKIVADLRLAIVLLLAIALFSISGTVIEQGETISFYQQNYPEDPALFGFLTWKVILILGLNHVYTTWWFLSLLVLFGTSLTTCTFTRQFPALKAARKWNFYQKARQFEKLALSTELAINDLKFVNNLLEQKGYKTFQENQAIYARKGIIGKIGPIVVHAAMLIILGGAIWGALTGFLAQAMVPTGSEFKVNNIIEAGPLSQPQIPKDWGIRVNRFWIDYTPDGTIDQFYSDLSVINNDGEELKHKTIYVNEPLRYHGVTFYQTDWGIAGVQAQVNNSPIFQLPMALLNTNGNGRIWGTWIPTKPDLSEGVSLLAKDLQGTMMVYDQKGDLYSAVRPGMILDINGVRLKIYQLIGSTGLQIKADPGIPFVYTGFGLLMMGVIMSYVSHSQIWVLQEDEHCYIGGKTNRSQVTFERELLGIIESLEPEKT.

The next 3 helical transmembrane spans lie at 30 to 50 (LRLA…GTVI), 89 to 109 (TWWF…CTFT), and 175 to 195 (IGPI…IWGA).

Belongs to the Ccs1/CcsB family. May interact with CcsA.

It localises to the cellular thylakoid membrane. In terms of biological role, required during biogenesis of c-type cytochromes (cytochrome c6 and cytochrome f) at the step of heme attachment. The chain is Cytochrome c biogenesis protein CcsB from Crocosphaera subtropica (strain ATCC 51142 / BH68) (Cyanothece sp. (strain ATCC 51142)).